Reading from the N-terminus, the 128-residue chain is Small ribosomal subunit protein bS6 (128 aa).

Belongs to the bacterial ribosomal protein bS6 family.

Binds together with bS18 to 16S ribosomal RNA. This is Small ribosomal subunit protein bS6 from Thermotoga petrophila (strain ATCC BAA-488 / DSM 13995 / JCM 10881 / RKU-1).